The following is a 365-amino-acid chain: MPRPILATIHPAAVHHNLERARRAAPDARVWAVVKANAYGHGIERVFEGLRAADGFALLDLAEAERVRALGWRGPILLLEGVFEPRDLELCSRLGLWHAVHCDAQIDWLAAHKTQVPHRVFLKMNSGMNRLGFTPERYRSAWARLNALPQVDEISCMTHFSDADGPRGIAHQVQAFQAATQDLPGERCIANSAALLRHGGDAQVRLDWVRAGIVLYGSAPDHPERRAADWDLQPTMTLASRIIGVQQLQAGDTVGYGSRFTAQGPLGIGIVACGYADGYPRHCDTGTPVLVNGVRTRTIGRVSMDMLAVDLTPVPGAGLGAEVTLWGRAANGAVLPIDEVAQAGGTIGYELMCALAPRVPVVVQD.

Residue Lys-35 is the Proton acceptor; specific for D-alanine of the active site. Lys-35 carries the post-translational modification N6-(pyridoxal phosphate)lysine. Residue Arg-130 participates in substrate binding. The Proton acceptor; specific for L-alanine role is filled by Tyr-256. Met-304 is a substrate binding site.

This sequence belongs to the alanine racemase family. Pyridoxal 5'-phosphate serves as cofactor.

It carries out the reaction L-alanine = D-alanine. It participates in amino-acid biosynthesis; D-alanine biosynthesis; D-alanine from L-alanine: step 1/1. Its function is as follows. Catalyzes the interconversion of L-alanine and D-alanine. May also act on other amino acids. This chain is Alanine racemase (alr), found in Acidovorax sp. (strain JS42).